We begin with the raw amino-acid sequence, 437 residues long: UDP-N-acetylmuramate--L-alanine ligase (437 aa).

108–114 serves as a coordination point for ATP; it reads GAHGKTS.

The protein belongs to the MurCDEF family.

The protein resides in the cytoplasm. It carries out the reaction UDP-N-acetyl-alpha-D-muramate + L-alanine + ATP = UDP-N-acetyl-alpha-D-muramoyl-L-alanine + ADP + phosphate + H(+). The protein operates within cell wall biogenesis; peptidoglycan biosynthesis. Cell wall formation. This chain is UDP-N-acetylmuramate--L-alanine ligase, found in Staphylococcus haemolyticus (strain JCSC1435).